Here is a 326-residue protein sequence, read N- to C-terminus: Delta-aminolevulinic acid dehydratase (326 aa).

Residues Cys119, Cys121, and Cys129 each contribute to the Zn(2+) site. The active-site Schiff-base intermediate with substrate is Lys198. 5-aminolevulinate-binding residues include Arg208 and Arg220. Residue Glu236 participates in Mg(2+) binding. Residue Lys251 is the Schiff-base intermediate with substrate of the active site. 5-aminolevulinate is bound by residues Ser277 and Tyr316.

The protein belongs to the ALAD family. In terms of assembly, homooctamer. Zn(2+) is required as a cofactor.

It carries out the reaction 2 5-aminolevulinate = porphobilinogen + 2 H2O + H(+). Its pathway is porphyrin-containing compound metabolism; protoporphyrin-IX biosynthesis; coproporphyrinogen-III from 5-aminolevulinate: step 1/4. Catalyzes an early step in the biosynthesis of tetrapyrroles. Binds two molecules of 5-aminolevulinate per subunit, each at a distinct site, and catalyzes their condensation to form porphobilinogen. This chain is Delta-aminolevulinic acid dehydratase (hemB), found in Synechococcus elongatus (strain ATCC 33912 / PCC 7942 / FACHB-805) (Anacystis nidulans R2).